Reading from the N-terminus, the 532-residue chain is Small ribosomal subunit protein uS2cz (532 aa).

The segment at 1–271 is N-terminal extension; that stretch reads METLEKNFKK…SPISSKEKKA (271 aa). 3 consecutive TRAM domains span residues 38–97, 127–186, and 197–260; these read ALQA…SILN, DFKV…KPIL, and NQMI…KILK.

This sequence belongs to the universal ribosomal protein uS2 family.

The protein localises to the plastid. Its subcellular location is the chloroplast. The chain is Small ribosomal subunit protein uS2cz (rps2-1) from Tetradesmus obliquus (Green alga).